We begin with the raw amino-acid sequence, 272 residues long: Ribosomal RNA small subunit methyltransferase A (272 aa).

S-adenosyl-L-methionine contacts are provided by Asn-15, Ile-17, Gly-42, Glu-64, Asp-90, and Asn-109.

It belongs to the class I-like SAM-binding methyltransferase superfamily. rRNA adenine N(6)-methyltransferase family. RsmA subfamily.

The protein localises to the cytoplasm. It catalyses the reaction adenosine(1518)/adenosine(1519) in 16S rRNA + 4 S-adenosyl-L-methionine = N(6)-dimethyladenosine(1518)/N(6)-dimethyladenosine(1519) in 16S rRNA + 4 S-adenosyl-L-homocysteine + 4 H(+). Functionally, specifically dimethylates two adjacent adenosines (A1518 and A1519) in the loop of a conserved hairpin near the 3'-end of 16S rRNA in the 30S particle. May play a critical role in biogenesis of 30S subunits. The protein is Ribosomal RNA small subunit methyltransferase A of Wolbachia sp. subsp. Drosophila simulans (strain wRi).